The primary structure comprises 87 residues: Anaphase-promoting complex subunit 11 (87 aa).

The RING-type; atypical zinc-finger motif lies at 35–77 (CVDCKIPGDDCPPVWGVCNHAFHMHCILKWLNANELQQCPMCR).

It belongs to the RING-box family. As to quaternary structure, the APC/C is composed of at least 13 subunits that stay tightly associated throughout the cell cycle: anapc1, anapc2, anapc3, anapc4, anapc5, anapc6, anapc7, anapc8, anapc10, anapc11, cdc20, cdc26 and cdh1.

It localises to the nucleus. It functions in the pathway protein modification; protein ubiquitination. In terms of biological role, component of the anaphase promoting complex/cyclosome (APC/C), a cell cycle-regulated E3 ubiquitin-protein ligase complex that controls progression through mitosis and the G1 phase of the cell cycle. This chain is Anaphase-promoting complex subunit 11 (anapc11), found in Dictyostelium discoideum (Social amoeba).